Consider the following 258-residue polypeptide: Type III pantothenate kinase (258 aa).

6-13 (DVGNTNTV) is a binding site for ATP. Substrate is bound by residues Tyr100 and 107–110 (GADR). Asp109 functions as the Proton acceptor in the catalytic mechanism. K(+) is bound at residue Asp129. An ATP-binding site is contributed by Thr132. Substrate is bound at residue Thr184.

It belongs to the type III pantothenate kinase family. Homodimer. It depends on NH4(+) as a cofactor. Requires K(+) as cofactor.

The protein resides in the cytoplasm. It carries out the reaction (R)-pantothenate + ATP = (R)-4'-phosphopantothenate + ADP + H(+). It participates in cofactor biosynthesis; coenzyme A biosynthesis; CoA from (R)-pantothenate: step 1/5. Functionally, catalyzes the phosphorylation of pantothenate (Pan), the first step in CoA biosynthesis. In Bacillus licheniformis (strain ATCC 14580 / DSM 13 / JCM 2505 / CCUG 7422 / NBRC 12200 / NCIMB 9375 / NCTC 10341 / NRRL NRS-1264 / Gibson 46), this protein is Type III pantothenate kinase.